The sequence spans 442 residues: Proline--tRNA ligase (442 aa).

This sequence belongs to the class-II aminoacyl-tRNA synthetase family. ProS type 2 subfamily. Homodimer.

It localises to the cytoplasm. The catalysed reaction is tRNA(Pro) + L-proline + ATP = L-prolyl-tRNA(Pro) + AMP + diphosphate. Its function is as follows. Catalyzes the attachment of proline to tRNA(Pro) in a two-step reaction: proline is first activated by ATP to form Pro-AMP and then transferred to the acceptor end of tRNA(Pro). The sequence is that of Proline--tRNA ligase from Sinorhizobium medicae (strain WSM419) (Ensifer medicae).